The primary structure comprises 530 residues: Zinc finger protein ZIC 4 (530 aa).

Basic residues-rich tracts occupy residues 31–40 and 97–113; these read HHPHHHHHPP and NPHH…HHMA. 2 disordered regions span residues 31-50 and 87-138; these read HHPH…TGYP and PGAL…SYSS. Residues 284–317 form a C2H2-type 1; atypical zinc finger; it reads LICKWIEEDQLPKKLCSKTFSTMHELVTHVTVEH. The segment at 326–353 adopts a C2H2-type 2; atypical zinc-finger fold; that stretch reads HICFWEECPREGKPFKAKYKLVNHIRVH. 3 C2H2-type zinc fingers span residues 359-383, 389-413, and 419-443; these read FPCP…KRTH, FKCE…SHVH, and YNCK…MKVH. The tract at residues 432–530 is disordered; the sequence is HPSSLRKHMK…YSNWQATNTF (99 aa). Residues 435 to 444 show a composition bias toward basic residues; it reads SLRKHMKVHC. 2 stretches are compositionally biased toward low complexity: residues 455–467 and 474–485; these read SSIP…SSDS and TSSQPEPPTSSQ. Residues 520 to 530 are compositionally biased toward polar residues; sequence SYSNWQATNTF.

Belongs to the GLI C2H2-type zinc-finger protein family. In terms of tissue distribution, at mid-gastrula stage (stage 11.5), weakly expressed in the prospective neural fold. Expressed in the neural plate border region at early neurula stage (stage 15) with strongest expression in the prospective regions of the hyoid and branchial crests. Expression in the dorsal central nervous system (CNS) continues through late neurula stage and early tail bud stages with expression strongest in the olfactory placode and expression levels increasing as development progresses. Becomes expressed in somites.

The protein localises to the nucleus. In terms of biological role, may bind to DNA. Induces neural and neural crest differentiation. Does not induce anterior neural tissue. This is Zinc finger protein ZIC 4 (zic4) from Xenopus laevis (African clawed frog).